The primary structure comprises 277 residues: Hemin import ATP-binding protein HmuV (277 aa).

Residues 25-260 (IHAQGLNLIL…DIIERVYGWP (236 aa)) form the ABC transporter domain. 57–64 (GPNGAGKS) is an ATP binding site.

The protein belongs to the ABC transporter superfamily. Heme (hemin) importer (TC 3.A.1.14.5) family. The complex is composed of two ATP-binding proteins (HmuV), two transmembrane proteins (HmuU) and a solute-binding protein (HmuT).

Its subcellular location is the cell inner membrane. Part of the ABC transporter complex HmuTUV involved in hemin import. Responsible for energy coupling to the transport system. In Photobacterium profundum (strain SS9), this protein is Hemin import ATP-binding protein HmuV.